The chain runs to 239 residues: Gamma-lactamase MBL2 (239 aa).

Positions 56, 58, 60, 61, 141, and 165 each coordinate Zn(2+).

The protein belongs to the metallo-beta-lactamase superfamily.

Its function is as follows. Gamma-lactamase; part of the Fusarium detoxification of benzoxazolinone cluster 2 (FDB2) involved in the degradation of benzoxazolinones produced by the host plant. Maize, wheat, and rye produce the 2 benzoxazinone phytoanticipins 2,4-dihy-droxy-7-methoxy-1,4-benzoxazin-3-one (DIMBOA) and 2,4-dihydroxy-1,4-benzoxazin-3-one (DIBOA) that, due to their inherent instability once released, spontaneously degrade to the more stable corresponding benzoxazolinones, 6-methoxy-2-benzoxazolinone (MBOA) and 2-benzoxazolinone (BOA), respectively. The first step in the detoxification of benzoxazolinones involves the hydrolysis of the cyclic ester bond of benzoxazolinones by the FDB1 cluster gamma-lactamase MBL1 to aminophenols. MBL1 is able to convert BOA into 2-aminophenol (2-AP), as well as MBOA into 5-methoxy-2-aminophenol (2-AMP). The FDB2 cluster N-malonyltransferase FDB2/NAT1 then metabolizes aminophenols via N-malonylation to non-toxic malonamic acids. FDB2/NAT1 converts 2-AP into N-(2-hydroxyphenyl) malonamic acid (HPMA) and 2-AMP into N-(2-hydroxy-4-methoxyphenyl) malonamic acid (HMPMA). The duplicated dienlactone hydrolases DLH1 and DLH2 may provide redundant function for hydrolyzing the lactone moiety in the BOA molecule. The roles of the amidases and other enzymes encoded by the 2 FDB clusters have not been identified so far. The protein is Gamma-lactamase MBL2 of Gibberella moniliformis (strain M3125 / FGSC 7600) (Maize ear and stalk rot fungus).